We begin with the raw amino-acid sequence, 689 residues long: DNA polymerase epsilon subunit B (689 aa).

Over residues 98–115 the composition is skewed to basic and acidic residues; that stretch reads EWSHEHPIQHEENILGRT. Positions 98 to 155 are disordered; it reads EWSHEHPIQHEENILGRTDDDENNSDDEMPIAADSSLQNVSLSSPMRQPTERDEYKQP. Over residues 116 to 126 the composition is skewed to acidic residues; it reads DDDENNSDDEM. Ser122 carries the phosphoserine modification. Over residues 132 to 144 the composition is skewed to polar residues; it reads SSLQNVSLSSPMR. Ser141 bears the Phosphoserine; by CDC28 mark. Positions 146–155 are enriched in basic and acidic residues; that stretch reads PTERDEYKQP. Ser613 is subject to Phosphoserine.

The protein belongs to the DNA polymerase epsilon subunit B family. As to quaternary structure, DNA polymerase epsilon is a heterotetramer consisting of POL2, DPB2, DPB3 and DPB4. Phosphorylated in a cell cycle dependent manner during late G1 phase. Phosphorylation may facilitate the interaction with POL2 or the activity of DNA polymerase II. Phosphorylation is independent of DNA replication but dependent upon CDC28 in vivo. Both Ser-141 and Ser-613 are phosphorylated in vivo, but in vitro only Ser-141 is phosphorylated by CDC28.

It is found in the cytoplasm. The protein resides in the nucleus. Functionally, as accessory component of the DNA polymerase epsilon complex participates in chromosomal DNA replication. It is required during synthesis of the leading and lagging DNA strands at the replication fork and binds at/or near replication origins and moves along DNA with the replication fork. It has 3'-5' proofreading exonuclease activity that correct errors arising during DNA replication. It is also involved in DNA synthesis during DNA repair. This Saccharomyces cerevisiae (strain ATCC 204508 / S288c) (Baker's yeast) protein is DNA polymerase epsilon subunit B (DPB2).